The sequence spans 155 residues: Protein FAM162B (155 aa).

A helical transmembrane segment spans residues 95–114; the sequence is VKACYIMMGLTIFACLVMIV.

The protein belongs to the UPF0389 family.

It is found in the membrane. The chain is Protein FAM162B (fam162b) from Danio rerio (Zebrafish).